The chain runs to 148 residues: Urease accessory protein UreE (148 aa).

Belongs to the UreE family.

It is found in the cytoplasm. In terms of biological role, involved in urease metallocenter assembly. Binds nickel. Probably functions as a nickel donor during metallocenter assembly. The chain is Urease accessory protein UreE from Halalkalibacterium halodurans (strain ATCC BAA-125 / DSM 18197 / FERM 7344 / JCM 9153 / C-125) (Bacillus halodurans).